We begin with the raw amino-acid sequence, 538 residues long: Carotenoid 9,10(9',10')-cleavage dioxygenase 1 (538 aa).

Fe cation-binding residues include His222, His270, His336, and His523.

The protein belongs to the carotenoid oxygenase family. Homodimer. The cofactor is Fe(2+). High expression in flowers and siliques. Also detected in stems, leaves and roots.

It is found in the cytoplasm. The enzyme catalyses all-trans-zeaxanthin + 2 O2 = 4,9-dimethyldodeca-2,4,6,8,10-pentaenedial + 2 (3R)-hydroxy-beta-ionone. In terms of biological role, cleaves a variety of carotenoids symmetrically at both the 9-10 and 9'-10' double bonds. Active on beta,beta-carotene, lutein, zeaxanthin, all-trans-violaxanthin, 9-cis-violaxanthin and 9'-cis-neoxanthin. With most substrates, the carotenoid is symmetrically cleaved. Probably not involved in abscisic acid biosynthesis. The protein is Carotenoid 9,10(9',10')-cleavage dioxygenase 1 (CCD1) of Arabidopsis thaliana (Mouse-ear cress).